The primary structure comprises 113 residues: Ig kappa chain V-II region 17S29.1 (113 aa).

The segment at 1–23 (DIVMTQAVFSNPVTLGTSASISC) is framework-1. A disulfide bridge connects residues Cys-23 and Cys-93. The interval 24–39 (RSSKSLLHSNGITYLY) is complementarity-determining-1. The segment at 40–54 (WYLQKPGQSPQLLLY) is framework-2. Residues 55–61 (QMSNLAS) are complementarity-determining-2. The interval 62–93 (GVPDRFSSSGSGTDFTLRISRVEAEDVGVYYC) is framework-3. Residues 94 to 102 (AHNLELPYT) are complementarity-determining-3. Residues 103–112 (FGGGTKLEIK) form a framework-4 region.

Anti-streptococcal group A carbohydrate antibody. The sequence is that of Ig kappa chain V-II region 17S29.1 from Mus musculus (Mouse).